Reading from the N-terminus, the 371-residue chain is Transposase for insertion sequence element IS421 (371 aa).

This sequence belongs to the transposase 11 family.

Its function is as follows. Involved in the transposition of the insertion sequence IS421. In Escherichia coli, this protein is Transposase for insertion sequence element IS421.